We begin with the raw amino-acid sequence, 428 residues long: Trigger factor (428 aa).

A PPIase FKBP-type domain is found at 163 to 248 (GDTAVIDFEG…VHEVKAKQLP (86 aa)).

This sequence belongs to the FKBP-type PPIase family. Tig subfamily.

The protein localises to the cytoplasm. It catalyses the reaction [protein]-peptidylproline (omega=180) = [protein]-peptidylproline (omega=0). Functionally, involved in protein export. Acts as a chaperone by maintaining the newly synthesized protein in an open conformation. Functions as a peptidyl-prolyl cis-trans isomerase. In Geobacillus thermodenitrificans (strain NG80-2), this protein is Trigger factor.